Here is a 190-residue protein sequence, read N- to C-terminus: ATP synthase subunit b (190 aa).

The chain crosses the membrane as a helical span at residues 24 to 44 (IVGSLICFVVILFFFWKLVLP).

It belongs to the ATPase B chain family. F-type ATPases have 2 components, F(1) - the catalytic core - and F(0) - the membrane proton channel. F(1) has five subunits: alpha(3), beta(3), gamma(1), delta(1), epsilon(1). F(0) has three main subunits: a(1), b(2) and c(10-14). The alpha and beta chains form an alternating ring which encloses part of the gamma chain. F(1) is attached to F(0) by a central stalk formed by the gamma and epsilon chains, while a peripheral stalk is formed by the delta and b chains.

It is found in the cell membrane. F(1)F(0) ATP synthase produces ATP from ADP in the presence of a proton or sodium gradient. F-type ATPases consist of two structural domains, F(1) containing the extramembraneous catalytic core and F(0) containing the membrane proton channel, linked together by a central stalk and a peripheral stalk. During catalysis, ATP synthesis in the catalytic domain of F(1) is coupled via a rotary mechanism of the central stalk subunits to proton translocation. Functionally, component of the F(0) channel, it forms part of the peripheral stalk, linking F(1) to F(0). The polypeptide is ATP synthase subunit b (Leifsonia xyli subsp. xyli (strain CTCB07)).